Consider the following 359-residue polypeptide: Gap junction alpha-5 protein (359 aa).

Topologically, residues 1 to 19 are cytoplasmic; that stretch reads MGDWSFLGEFLEEVHKHST. Residues 20–40 form a helical membrane-spanning segment; that stretch reads VIGKVWLTVLFIFRMLVLGTA. Residues 41 to 76 are Extracellular-facing; sequence AESSWGDEQADFLCDTMQPGCENVCYDQAFPISHIR. A helical membrane pass occupies residues 77 to 97; sequence YWVLQVIFVSTPSLVYLGHAV. Residues 98 to 165 lie on the Cytoplasmic side of the membrane; that stretch reads HMVRVQEKRK…CSILIRTTME (68 aa). A helical membrane pass occupies residues 166 to 186; sequence VAFIVGQYLLYGVFLDTLHVC. Topologically, residues 187 to 206 are extracellular; the sequence is RRSPCPHPVNCYVSRPTEKN. A helical transmembrane segment spans residues 207–227; sequence VFIVFMLAVAGLSLFLSLAEL. Topologically, residues 228-359 are cytoplasmic; it reads YHLGWKKIRQ…SKARSDDLSV (132 aa). Disordered stretches follow at residues 285–305 and 317–359; these read SNKM…VRSQ and RYAQ…DLSV. A phosphoserine mark is found at S354 and S358.

Belongs to the connexin family. Alpha-type (group II) subfamily. A connexon is composed of a hexamer of connexins.

It localises to the cell membrane. The protein resides in the cell junction. The protein localises to the gap junction. Functionally, one gap junction consists of a cluster of closely packed pairs of transmembrane channels, the connexons, through which materials of low MW diffuse from one cell to a neighboring cell. The sequence is that of Gap junction alpha-5 protein (GJA5) from Bos taurus (Bovine).